Consider the following 292-residue polypeptide: Ribosomal protein L11 methyltransferase (292 aa).

Residues threonine 144, glycine 165, aspartate 187, and asparagine 229 each contribute to the S-adenosyl-L-methionine site.

Belongs to the methyltransferase superfamily. PrmA family.

The protein resides in the cytoplasm. The catalysed reaction is L-lysyl-[protein] + 3 S-adenosyl-L-methionine = N(6),N(6),N(6)-trimethyl-L-lysyl-[protein] + 3 S-adenosyl-L-homocysteine + 3 H(+). Its function is as follows. Methylates ribosomal protein L11. This Pseudomonas fluorescens (strain ATCC BAA-477 / NRRL B-23932 / Pf-5) protein is Ribosomal protein L11 methyltransferase.